A 156-amino-acid polypeptide reads, in one-letter code: ATP synthase subunit b (156 aa).

Residues 7 to 27 traverse the membrane as a helical segment; it reads LIGQLIAFAIFVAFCMKFVWP.

Belongs to the ATPase B chain family. As to quaternary structure, F-type ATPases have 2 components, F(1) - the catalytic core - and F(0) - the membrane proton channel. F(1) has five subunits: alpha(3), beta(3), gamma(1), delta(1), epsilon(1). F(0) has three main subunits: a(1), b(2) and c(10-14). The alpha and beta chains form an alternating ring which encloses part of the gamma chain. F(1) is attached to F(0) by a central stalk formed by the gamma and epsilon chains, while a peripheral stalk is formed by the delta and b chains.

Its subcellular location is the cell inner membrane. Functionally, f(1)F(0) ATP synthase produces ATP from ADP in the presence of a proton or sodium gradient. F-type ATPases consist of two structural domains, F(1) containing the extramembraneous catalytic core and F(0) containing the membrane proton channel, linked together by a central stalk and a peripheral stalk. During catalysis, ATP synthesis in the catalytic domain of F(1) is coupled via a rotary mechanism of the central stalk subunits to proton translocation. Component of the F(0) channel, it forms part of the peripheral stalk, linking F(1) to F(0). In Pasteurella multocida (strain Pm70), this protein is ATP synthase subunit b.